The chain runs to 90 residues: Probable dynein light chain 2, cytoplasmic (90 aa).

The protein belongs to the dynein light chain family.

It is found in the cytoplasm. It localises to the cytoskeleton. Acts as one of several non-catalytic accessory components of a dynein complex. This Caenorhabditis elegans protein is Probable dynein light chain 2, cytoplasmic (dlc-2).